A 148-amino-acid chain; its full sequence is 3-dehydroquinate dehydratase (148 aa).

The active-site Proton acceptor is the Tyr-24. Residues Asn-75, His-81, and Asp-88 each coordinate substrate. His-101 acts as the Proton donor in catalysis. Residues 102–103 and Arg-112 contribute to the substrate site; that span reads LS.

It belongs to the type-II 3-dehydroquinase family. As to quaternary structure, homododecamer.

The enzyme catalyses 3-dehydroquinate = 3-dehydroshikimate + H2O. It participates in metabolic intermediate biosynthesis; chorismate biosynthesis; chorismate from D-erythrose 4-phosphate and phosphoenolpyruvate: step 3/7. Its function is as follows. Catalyzes a trans-dehydration via an enolate intermediate. The protein is 3-dehydroquinate dehydratase of Sinorhizobium medicae (strain WSM419) (Ensifer medicae).